We begin with the raw amino-acid sequence, 68 residues long: Disintegrin EMF10B (68 aa).

Residues 1–68 form the Disintegrin domain; sequence ELLQNSGNPC…SDCPRNPVFK (68 aa). Intrachain disulfides connect Cys10-Cys33, Cys24-Cys30, Cys29-Cys54, and Cys42-Cys61. The Cell attachment site; atypical (MGD) signature appears at 46–48; it reads MGD.

The protein belongs to the venom metalloproteinase (M12B) family. P-II subfamily. P-IIe sub-subfamily. In terms of assembly, heterodimer with EMF10A; disulfide-linked. As to expression, expressed by the venom gland.

Its subcellular location is the secreted. Functionally, extremely potent and selective inhibitor of integrin alpha-5/beta-1 (ITGA5/ITGB1). Partially inhibits adhesion of cells expressing alpha-IIb/beta-3 (ITGA2B/ITGB3), alpha-V/beta-3 (ITGAV/ITGB3), and alpha-4/beta-1 (ITGA4/ITGB1) to appropriate ligands only at concentration higher than 500 nM. Weakly inhibits ADP-induced platelet aggregation. The polypeptide is Disintegrin EMF10B (Eristicophis macmahoni (Leaf-nosed viper)).